Here is a 218-residue protein sequence, read N- to C-terminus: Type II restriction enzyme KpnI (218 aa).

The catalysed reaction is Endonucleolytic cleavage of DNA to give specific double-stranded fragments with terminal 5'-phosphates.. Its function is as follows. A P subtype restriction enzyme that recognizes the double-stranded sequence 5'-GGTACC-3' and cleaves after C-5. This Klebsiella pneumoniae protein is Type II restriction enzyme KpnI.